A 507-amino-acid chain; its full sequence is 2,3-bisphosphoglycerate-independent phosphoglycerate mutase (507 aa).

Asp-13 and Ser-63 together coordinate Mn(2+). The Phosphoserine intermediate role is filled by Ser-63. Residues His-124, 153–154 (RD), Arg-183, Arg-189, 254–257 (RADR), and Lys-330 each bind substrate. Mn(2+) contacts are provided by Asp-396, His-400, Asp-437, His-438, and His-456.

Belongs to the BPG-independent phosphoglycerate mutase family. As to quaternary structure, monomer. It depends on Mn(2+) as a cofactor.

It carries out the reaction (2R)-2-phosphoglycerate = (2R)-3-phosphoglycerate. It participates in carbohydrate degradation; glycolysis; pyruvate from D-glyceraldehyde 3-phosphate: step 3/5. Catalyzes the interconversion of 2-phosphoglycerate and 3-phosphoglycerate. The sequence is that of 2,3-bisphosphoglycerate-independent phosphoglycerate mutase from Paracoccus denitrificans (strain Pd 1222).